Here is a 553-residue protein sequence, read N- to C-terminus: Urocanate hydratase (553 aa).

Residues 45-46 (GG), Gln123, 169-171 (GMG), Asp189, Arg194, 235-236 (NA), 256-260 (QTSAH), 266-267 (YV), Tyr315, and Gly485 contribute to the NAD(+) site.

It belongs to the urocanase family. The cofactor is NAD(+).

The protein localises to the cytoplasm. It carries out the reaction 4-imidazolone-5-propanoate = trans-urocanate + H2O. It participates in amino-acid degradation; L-histidine degradation into L-glutamate; N-formimidoyl-L-glutamate from L-histidine: step 2/3. In terms of biological role, catalyzes the conversion of urocanate to 4-imidazolone-5-propionate. The polypeptide is Urocanate hydratase (Staphylococcus aureus (strain MRSA252)).